The chain runs to 791 residues: Outer membrane protein assembly factor BamA (791 aa).

5 consecutive POTRA domains span residues 59-130, 131-209, 212-298, 301-383, and 386-459; these read NAIA…VTEK, PRID…VEEG, LYIK…VKEG, YKLG…IRKR, and VYIN…VKEQ.

It belongs to the BamA family. In terms of assembly, part of the Bam complex.

It is found in the cell outer membrane. Part of the outer membrane protein assembly complex, which is involved in assembly and insertion of beta-barrel proteins into the outer membrane. This Nitratidesulfovibrio vulgaris (strain ATCC 29579 / DSM 644 / CCUG 34227 / NCIMB 8303 / VKM B-1760 / Hildenborough) (Desulfovibrio vulgaris) protein is Outer membrane protein assembly factor BamA.